We begin with the raw amino-acid sequence, 3423 residues long: Genome polyprotein (3423 aa).

Residues 1–25 (MKNPKKKSGGFRIVNMLKRGVARVS) are disordered. The Cytoplasmic portion of the chain corresponds to 1–104 (MKNPKKKSGG…INARKEKKRR (104 aa)). Positions 37–72 (LLLGHGPIRMVLAILAFLRFTAIKPSLGLINRWGSV) are hydrophobic; homodimerization of capsid protein C. Residues 105–122 (GADTSVGIVGLLLTTAMA) constitute a propeptide, ER anchor for capsid protein C, removed in mature form by serine protease NS3. Residues 105 to 125 (GADTSVGIVGLLLTTAMAAEV) traverse the membrane as a helical segment. Residues 126–249 (TRRGSAYYMY…YTKHLIRVEN (124 aa)) are Extracellular-facing. N-linked (GlcNAc...) asparagine; by host glycosylation occurs at asparagine 192. A helical membrane pass occupies residues 250–269 (WIFRNPGFALAAAAIAWLLG). Topologically, residues 270–274 (SSTSQ) are cytoplasmic. A helical transmembrane segment spans residues 275-290 (KVIYLVMILLIAPAYS). Topologically, residues 291–745 (IRCIGVSNRD…HQIFGAAFKS (455 aa)) are extracellular. Lysine 328 participates in a covalent cross-link: Glycyl lysine isopeptide (Lys-Gly) (interchain with G-Cter in ubiquitin). Disulfide bonds link cysteine 350/cysteine 406 and cysteine 382/cysteine 411. The segment at 388-401 (DRGWGNGCGLFGKG) is fusion peptide. N-linked (GlcNAc...) asparagine; by host glycosylation occurs at asparagine 444. Cystine bridges form between cysteine 480–cysteine 581 and cysteine 598–cysteine 629. Lysine 571 is covalently cross-linked (Glycyl lysine isopeptide (Lys-Gly) (interchain with G-Cter in ubiquitin)). The chain crosses the membrane as a helical span at residues 746–767 (LFGGMSWFSQILIGTLLMWLGL). The Cytoplasmic portion of the chain corresponds to 768-773 (NTKNGS). Residues 774–794 (ISLMCLALGGVLIFLSTAVSA) traverse the membrane as a helical segment. Residues 795–1177 (DVGCSVDFSK…EGLKKRMTTK (383 aa)) are Lumenal-facing. 6 disulfides stabilise this stretch: cysteine 798–cysteine 809, cysteine 849–cysteine 937, cysteine 973–cysteine 1017, cysteine 1074–cysteine 1123, cysteine 1085–cysteine 1106, and cysteine 1107–cysteine 1110. N-linked (GlcNAc...) asparagine; by host glycans are attached at residues asparagine 924 and asparagine 1001. A helical membrane pass occupies residues 1178-1198 (IIISTSMAVLVAMILGGFSMS). The Cytoplasmic portion of the chain corresponds to 1199–1220 (DLAKLAILMGATFAEMNTGGDV). The chain crosses the membrane as a helical span at residues 1221–1241 (AHLALIAAFKVRPALLVSFIF). The Lumenal portion of the chain corresponds to 1242–1270 (RANWTPRESMLLALASCLLQTAISALEGD). The chain crosses the membrane as a helical span at residues 1271–1291 (LMVLINGFALAWLAIRAMVVP). Residues 1292 to 1295 (RTDN) are Cytoplasmic-facing. Residues 1296 to 1316 (ITLAILAALTPLARGTLLVAW) traverse the membrane as a helical segment. At 1317-1345 (RAGLATCGGFMLLSLKGKGSVKKNLPFVM) the chain is on the lumenal side. The chain crosses the membrane as a helical span at residues 1346–1366 (ALGLTAVRLVDPINVVGLLLL). Residues 1367-1373 (TRSGKRS) are Cytoplasmic-facing. Residues 1374–1394 (WPPSEVLTAVGLICALAGGFA) traverse the membrane as a helical segment. At 1395–1397 (KAD) the chain is on the lumenal side. The helical transmembrane segment at 1398–1418 (IEMAGPMAAVGLLIVSYVVSG) threads the bilayer. Topologically, residues 1419–1472 (KSVDMYIERAGDITWEKDAEVTGNSPRLDVALDESGDFSLVEDDGPPMREIILK) are cytoplasmic. Positions 1425–1464 (IERAGDITWEKDAEVTGNSPRLDVALDESGDFSLVEDDGP) are interacts with and activates NS3 protease. A disordered region spans residues 1429–1451 (GDITWEKDAEVTGNSPRLDVALD). The helical intramembrane region spans 1473–1493 (VVLMTICGMNPIAIPFAAGAW). Residues 1494–2170 (YVYVKTGKRS…KAAAAQLPET (677 aa)) lie on the Lumenal side of the membrane. The 178-residue stretch at 1503–1680 (SGALWDVPAP…RREEETPVEC (178 aa)) folds into the Peptidase S7 domain. Catalysis depends on charge relay system; for serine protease NS3 activity residues histidine 1553, aspartate 1577, and serine 1637. Residues 1683–1839 (PSMLKKKQLT…DSNSPIMDTE (157 aa)) enclose the Helicase ATP-binding domain. Positions 1687–1690 (KKKQ) are important for RNA-binding. Residue 1696-1703 (LHPGAGKT) participates in ATP binding. A DEAH box motif is present at residues 1787–1790 (DEAH). Positions 1834 to 2013 (PIMDTEVEVP…GLIASLYRPE (180 aa)) constitute a Helicase C-terminal domain. Position 1891 is an N6-acetyllysine; by host (lysine 1891). The chain crosses the membrane as a helical span at residues 2171-2191 (LETIMLLGLLGTVSLGIFFVL). Over 2192–2195 (MRNK) the chain is Lumenal. An intramembrane region (helical) is located at residues 2196 to 2216 (GIGKMGFGMVTLGASAWLMWL). Over 2217–2218 (SE) the chain is Cytoplasmic. A helical membrane pass occupies residues 2219 to 2239 (IEPARIACVLIVVFLLLVVLI). The Lumenal segment spans residues 2240–2254 (PEPEKQRSPQDNQMA). Positions 2255–2269 (IIIMVAVGLLGLITA) form an intramembrane region, helical. Residues 2270–2307 (NELGWLERTKSDLSHLMGRREEGATIGFSMDIDLRPAS) lie on the Lumenal side of the membrane. An intramembrane region (helical) is located at residues 2308–2328 (AWAIYAALTTFITPAVQHAVT). The Lumenal portion of the chain corresponds to 2329 to 2344 (TSYNNYSLMAMATQAG). A helical membrane pass occupies residues 2345–2365 (VLFGMGKGMPFYAWDFGVPLL). Topologically, residues 2366-2375 (MIGCYSQLTP) are cytoplasmic. Residues 2376–2396 (LTLIVAIILLVAHYMYLIPGL) form a helical membrane-spanning segment. Topologically, residues 2397–2441 (QAAAARAAQKRTAAGIMKNPVVDGIVVTDIDTMTIDPQVEKKMGQ) are lumenal. A helical membrane pass occupies residues 2442–2462 (VLLIAVAVSSAILSRTAWGWG). Residues 2463–3423 (EAGALITAAT…GEEGSTPGVL (961 aa)) are Cytoplasmic-facing. An mRNA cap 0-1 NS5-type MT domain is found at 2521–2785 (GGGTGETLGE…DVNLGSGTRA (265 aa)). 2533-2539 (KARLNQM) is a binding site for GTP. An S-adenosyl-L-methionine-binding site is contributed by serine 2576. Serine 2576 carries the post-translational modification Phosphoserine. The active-site For 2'-O-MTase activity is lysine 2581. Residues 2597 to 2600 (VIDL) are SUMO-interacting motif (SIM). The S-adenosyl-L-methionine site is built by glycine 2606, tryptophan 2607, threonine 2624, lysine 2625, histidine 2630, glutamate 2631, aspartate 2651, valine 2652, aspartate 2666, and isoleucine 2667. Aspartate 2666 (for 2'-O-MTase activity) is an active-site residue. 2669-2675 (ESSSSPE) is a GTP binding site. Residue lysine 2702 is the For 2'-O-MTase activity of the active site. A GTP-binding site is contributed by 2733–2735 (RNS). The active-site For 2'-O-MTase activity is glutamate 2738. Residue tyrosine 2740 coordinates S-adenosyl-L-methionine. The Nuclear localization signal (NLS) signature appears at 2908 to 2914 (KHKRPRV). Zn(2+) is bound by residues glutamate 2959, histidine 2963, cysteine 2968, and cysteine 2971. One can recognise a RdRp catalytic domain in the interval 3049-3199 (GRMYADDTAG…KPIDDRFAHA (151 aa)). Residues histidine 3234, cysteine 3250, and cysteine 3369 each coordinate Zn(2+).

The protein in the N-terminal section; belongs to the class I-like SAM-binding methyltransferase superfamily. mRNA cap 0-1 NS5-type methyltransferase family. As to quaternary structure, homodimer. Interacts with host SERTAD3; this interaction promotes capsid protein C degradation. Interacts with host CAPRIN1; this interaction is probably linked to the inhibition of stress granules formation by the virus. Interacts with host G3BP1; this interaction is probably linked to the inhibition of stress granules formation by the virus. In terms of assembly, forms heterodimers with envelope protein E in the endoplasmic reticulum and Golgi. Interacts with non-structural protein 2A. Homodimer; in the endoplasmic reticulum and Golgi. Interacts with host TYRO3, AXL and DC-SIGN proteins. Interacts with non-structural protein 2A. Interacts with host HAVCR1; this interaction likely mediates virus attachment to host cell. Interacts with host NCAM1. Interacts with host HSPA5. Interacts with Aedes aegypti SRPN25, APY and venom allergen-1 salivary proteins; the interactions do not affect Zika virus replication in human endothelial cells and keratinocytes. As to quaternary structure, homodimer; Homohexamer when secreted. Interacts with host TBK1. Interacts with host USP8. Interacts with envelope protein E. In terms of assembly, interacts with the structural protein prM/E complex, and the NS2B/NS3 protease complex. Forms a heterodimer with serine protease NS3. May form homooligomers. Interacts with human SPCS1. Interacts with non-structural protein 2A. As to quaternary structure, forms a heterodimer with NS2B. Interacts with NS4B. Interacts with unphosphorylated RNA-directed RNA polymerase NS5; this interaction stimulates RNA-directed RNA polymerase NS5 guanylyltransferase activity. Interacts with non-structural protein 2A. Interacts with host SHFL; this interaction promotes NS3 degradation via a lysosome-dependent pathway. Interacts with host CEP63; this interaction disorganizes the centrosome and inhibits host innate immune response. In terms of assembly, may interact with host ANKLE2; the interaction may cause defects in brain development, such as microcephaly. May interact with host SRPRA and SEC61G. Interacts with serine protease NS3. Interacts with NS1. As to quaternary structure, homodimer; dimerization may negatively regulate the GTase activity, a crucial step in the capping process. Interacts with host STAT2; this interaction inhibits the phosphorylation of the latter, and, when all viral proteins are present (polyprotein), targets STAT2 for degradation. Interacts with host TBK1 and IKBKE; these interactions lead to the inhibition of the host RIG-I signaling pathway. Interacts with host PAF1 complex; the interaction may prevent the recruitment of the host PAF1 complex to interferon-responsive genes, and thus reduces the immune response. Interacts with serine protease NS3. Interacts with host KPNA2. Interacts with host ZSWIM8; this interaction allows STAT2 binding to ZSWIM8 and subsequent proteasomal degradation leading to inhibition of interferon signaling. In terms of processing, specific enzymatic cleavages in vivo yield mature proteins. Cleavages in the lumen of endoplasmic reticulum are performed by host signal peptidase, whereas cleavages in the cytoplasmic side are performed by serine protease NS3. Signal cleavage at the 2K-4B site requires a prior NS3 protease-mediated cleavage at the 4A-2K site. Post-translationally, cleaved in post-Golgi vesicles by a host furin, releasing the mature small envelope protein M, and peptide pr. This cleavage is incomplete as up to 30% of viral particles still carry uncleaved prM. N-glycosylation plays a role in virulence in mammalian and mosquito hosts, but may have no effect on neurovirulence. In terms of processing, ubiquitination by host TRIM7 promotes virus attachment and fusion of the virus and the host endosome membrane. Post-translationally, N-glycosylated. The excreted form is glycosylated, which is required for efficient secretion of the protein from infected cells. Ubiquitination by host TRIM22 leads to proteasomal degradation. In terms of processing, acetylated by host KAT5. Acetylation modulates NS3 RNA-binding and unwinding activities and plays an important positive role for viral replication. Post-translationally, phosphorylated on serines residues. This phosphorylation may trigger NS5 nuclear localization. Sumoylated, required for regulating IFN induced interferon stimulated genes/ISGs.

It is found in the virion. It localises to the host nucleus. The protein localises to the host cytoplasm. Its subcellular location is the host perinuclear region. The protein resides in the secreted. It is found in the virion membrane. It localises to the host endoplasmic reticulum membrane. It carries out the reaction a 5'-end (5'-triphosphoguanosine)-ribonucleoside in mRNA + S-adenosyl-L-methionine = a 5'-end (N(7)-methyl 5'-triphosphoguanosine)-ribonucleoside in mRNA + S-adenosyl-L-homocysteine. The enzyme catalyses a 5'-end (N(7)-methyl 5'-triphosphoguanosine)-ribonucleoside in mRNA + S-adenosyl-L-methionine = a 5'-end (N(7)-methyl 5'-triphosphoguanosine)-(2'-O-methyl-ribonucleoside) in mRNA + S-adenosyl-L-homocysteine + H(+). The catalysed reaction is RNA(n) + a ribonucleoside 5'-triphosphate = RNA(n+1) + diphosphate. It catalyses the reaction Selective hydrolysis of -Xaa-Xaa-|-Yaa- bonds in which each of the Xaa can be either Arg or Lys and Yaa can be either Ser or Ala.. It carries out the reaction a ribonucleoside 5'-triphosphate + H2O = a ribonucleoside 5'-diphosphate + phosphate + H(+). The enzyme catalyses ATP + H2O = ADP + phosphate + H(+). In terms of biological role, plays a role in virus budding by binding to the cell membrane and gathering the viral RNA into a nucleocapsid that forms the core of the mature virus particle. During virus entry, may induce genome penetration into the host cytoplasm after hemifusion induced by the surface proteins. Can migrate to the cell nucleus where it modulates host functions. Inhibits the integrated stress response (ISR) in the infected cell. Functionally, inhibits RNA silencing by interfering with host Dicer. Prevents premature fusion activity of envelope proteins in trans-Golgi by binding to envelope protein E at pH 6.0. After virion release in extracellular space, gets dissociated from E dimers. Its function is as follows. Plays a role in host immune defense modulation and protection of envelope protein E during virion synthesis. PrM-E cleavage is inefficient, many virions are only partially matured and immature prM-E proteins could play a role in immune evasion. Contributes to fetal microcephaly in humans. Acts as a chaperone for envelope protein E during intracellular virion assembly by masking and inactivating envelope protein E fusion peptide. prM is the only viral peptide matured by host furin in the trans-Golgi network probably to avoid catastrophic activation of the viral fusion activity in acidic Golgi compartment prior to virion release. In terms of biological role, may play a role in virus budding. Exerts cytotoxic effects by activating a mitochondrial apoptotic pathway through M ectodomain. May display a viroporin activity. Functionally, binds to host cell surface receptors and mediates fusion between viral and cellular membranes. Efficient virus attachment to cell is, at least in part, mediated by host HAVCR1 in a cell-type specific manner. In addition, host NCAM1 can also be used as entry receptor. Interaction with host HSPA5 plays an important role in the early stages of infection as well. Envelope protein is synthesized in the endoplasmic reticulum and forms a heterodimer with protein prM. The heterodimer plays a role in virion budding in the ER, and the newly formed immature particle is covered with 60 spikes composed of heterodimers between precursor prM and envelope protein E. The virion is transported to the Golgi apparatus where the low pH causes the dissociation of PrM-E heterodimers and formation of E homodimers. PrM-E cleavage is inefficient, many virions are only partially matured and immature prM-E proteins could play a role in immune evasion. Plays a role in the inhibition of host RLR-induced interferon-beta activation by targeting TANK-binding kinase 1/TBK1. In addition, recruits the host deubiquitinase USP8 to cleave 'Lys-11'-linked polyubiquitin chains from caspase-1/CASP1 thus inhibiting its proteasomal degradation. In turn, stabilized CASP1 promotes cleavage of cGAS, which inhibits its ability to recognize mitochondrial DNA release and initiate type I interferon signaling. Its function is as follows. Component of the viral RNA replication complex that recruits genomic RNA, the structural protein prM/E complex, and the NS2B/NS3 protease complex to the virion assembly site and orchestrates virus morphogenesis. Antagonizes also the host MDA5-mediated induction of alpha/beta interferon antiviral response. May disrupt adherens junction formation and thereby impair proliferation of radial cells in the host cortex. In terms of biological role, required cofactor for the serine protease function of NS3. Functionally, displays three enzymatic activities: serine protease, NTPase and RNA helicase. NS3 serine protease, in association with NS2B, performs its autocleavage and cleaves the polyprotein at dibasic sites in the cytoplasm: C-prM, NS2A-NS2B, NS2B-NS3, NS3-NS4A, NS4A-2K and NS4B-NS5. NS3 RNA helicase binds RNA and unwinds dsRNA in the 3' to 5' direction. Inhibits the integrated stress response (ISR) in the infected cell by blocking stress granules assembly. Disrupts host centrosome organization in a CEP63-dependent manner to degrade host TBK1 and inhibits innate immune response. Regulates the ATPase activity of the NS3 helicase activity. NS4A allows NS3 helicase to conserve energy during unwinding. Cooperatively with NS4B suppresses the Akt-mTOR pathway and leads to cellular dysregulation. By inhibiting host ANKLE2 functions, may cause defects in brain development, such as microcephaly. Also antagonizes the host MDA5-mediated induction of alpha/beta interferon antiviral response. Inhibits the integrated stress response (ISR) in the infected cell by blocking stress granules assembly. Its function is as follows. Functions as a signal peptide for NS4B and is required for the interferon antagonism activity of the latter. In terms of biological role, induces the formation of ER-derived membrane vesicles where the viral replication takes place. Also plays a role in the inhibition of host RLR-induced interferon-beta production at TANK-binding kinase 1/TBK1 level. Cooperatively with NS4A suppresses the Akt-mTOR pathway and leads to cellular dysregulation. Functionally, replicates the viral (+) and (-) RNA genome, and performs the capping of genomes in the cytoplasm. Methylates viral RNA cap at guanine N-7 and ribose 2'-O positions. Once sufficient NS5 is expressed, binds to the cap-proximal structure and inhibits further translation of the viral genome. Besides its role in RNA genome replication, also prevents the establishment of a cellular antiviral state by blocking the interferon-alpha/beta (IFN-alpha/beta) signaling pathway. Mechanistically, interferes with host kinases TBK1 and IKKE upstream of interferon regulatory factor 3/IRF3 to inhibit the RIG-I pathway. Also antagonizes type I interferon signaling by targeting STAT2 for degradation by the proteasome thereby preventing activation of JAK-STAT signaling pathway. Mechanistically, acts as a scaffold protein to connect host ZSWIM8/CUL3 ligase complex and STAT2, leading to STAT2 degradation. Within the host nucleus, disrupts host SUMO1 and STAT2 co-localization with PML, resulting in PML degradation. May also reduce immune responses by preventing the recruitment of the host PAF1 complex to interferon-responsive genes. The sequence is that of Genome polyprotein from Zika virus (isolate ZIKV/Human/French Polynesia/10087PF/2013) (ZIKV).